Consider the following 1151-residue polypeptide: Ankyrin and IPT/TIG repeat-containing protein C26H5.05 (1151 aa).

Disordered stretches follow at residues 77-104 (NLPSIAPPSLSHASSPNLSNSQDEAECL), 452-511 (KSRN…ENSR), and 516-535 (QLSASDSHSPNSKSTLKSVE). Residues 87-98 (SHASSPNLSNSQ) show a composition bias toward polar residues. Positions 452–463 (KSRNLTKSEKTG) are enriched in basic and acidic residues. Composition is skewed to polar residues over residues 464-496 (KSNSQQAPSNHVLSKSNTVPNLVTGFPTRSDNP) and 517-532 (LSASDSHSPNSKSTLK). In terms of domain architecture, IPT/TIG spans 658–739 (PLISRIIPNK…SSEAPVMFTY (82 aa)). 2 ANK repeats span residues 861–890 (SGRSLLHLTAACGLSNASTFLCNAGCDVNK) and 894–923 (LGYTPLHYASLYDHKDICVNLLSNGAKPDV). Positions 1041–1067 (PPPYSEFADDTTAQAGSSKRDSAISED) are disordered. Residues 1058-1067 (SKRDSAISED) show a composition bias toward basic and acidic residues. The chain crosses the membrane as a helical span at residues 1113–1133 (MDFMLFSFWLPALLLLSIFGL).

It localises to the vacuole membrane. This is Ankyrin and IPT/TIG repeat-containing protein C26H5.05 from Schizosaccharomyces pombe (strain 972 / ATCC 24843) (Fission yeast).